Consider the following 186-residue polypeptide: Der GTPase-activating protein YihI (186 aa).

Positions 1-65 are disordered; sequence MARTKKTRRI…AGSRHSAVDT (65 aa). 2 stretches are compositionally biased toward basic and acidic residues: residues 9–25 and 34–45; these read RITD…RPEN and TRYELDAKSREE.

Belongs to the YihI family. As to quaternary structure, interacts with Der.

In terms of biological role, a GTPase-activating protein (GAP) that modifies Der/EngA GTPase function. May play a role in ribosome biogenesis. The chain is Der GTPase-activating protein YihI from Histophilus somni (strain 129Pt) (Haemophilus somnus).